A 997-amino-acid chain; its full sequence is Glutamate [NMDA] receptor subunit 1 (997 aa).

The signal sequence occupies residues 1–26; sequence MAMAEFVFCRPLFGLAIVLLVAPIDA. The Extracellular portion of the chain corresponds to 27 to 573; it reads AQRHTASDNP…TLVSFLQPFS (547 aa). Asn-258, Asn-314, Asn-345, Asn-397, Asn-454, Asn-481, and Asn-501 each carry an N-linked (GlcNAc...) asparagine glycan. Residues 530–532 and Arg-537 each bind glycine; that span reads PLT. Residues 574-594 traverse the membrane as a helical segment; it reads NTLWILVMVSVHVVALVLYLL. Topologically, residues 595–651 are cytoplasmic; the sequence is DRFSPFGRFKLSHSDSNEEKALNLSSAVWFAWGVLLNSGIGEGTPRSFSARVLGMVW. A helical membrane pass occupies residues 652–672; that stretch reads AGFAMIIVASYTANLAAFLVL. Topologically, residues 673–831 are extracellular; sequence ERPKTKLSGI…KTPNTLGLKN (159 aa). Asn-693 is a glycosylation site (N-linked (GlcNAc...) asparagine). Glycine-binding residues include Ser-703 and Asp-747. A helical transmembrane segment spans residues 832 to 852; sequence MAGVFILVGVGIAGGVGLIII. The Cytoplasmic segment spans residues 853–997; sequence EVIYKKHQVK…YTSDVSHLVV (145 aa). The tract at residues 970–997 is disordered; the sequence is LGKTRPQQSVLPPRYSPGYTSDVSHLVV. Polar residues predominate over residues 987–997; that stretch reads GYTSDVSHLVV.

The protein belongs to the glutamate-gated ion channel (TC 1.A.10.1) family. Forms a heteromeric NMDA channel with Nmdar2. In terms of tissue distribution, highly expressed in adult heads: in the brain and ring gland. Low expression throughout the entire brain is also seen. Higher expression levels were observed in some scattered cell bodies and part of their fibers, including those from several pairs of DPM (dorsal-posterior-medial) neurons surrounding the calyx, DAL (dorsal-anterior-lateral) and DPL (dorsal-posterior-lateral) neurons in the lateral protocerebrum (LP), VAL (ventral-anterior-lateral) neurons in the anterior protocerebrum, and two pairs of VP (ventral-posterior) neurons in the posterior protocerebrum. Many cell bodies in the optic lobes show preferential expression. Punctuate expression is notably detected in many brain regions including the superior medial protocerebrum. Weakly expressed in the antennal lobes and central complex.

The protein resides in the cell membrane. It localises to the postsynaptic cell membrane. It is found in the postsynaptic density. Its function is as follows. NMDA receptor subtype of glutamate-gated ion channels with high calcium permeability and voltage-dependent sensitivity to magnesium. Mediated by glycine. This protein plays a key role in synaptic plasticity, synaptogenesis, excitotoxicity, memory acquisition and learning. It mediates neuronal functions in glutamate neurotransmission. Is involved in the cell surface targeting of NMDA receptors. Plays a role in associative learning and in long-term memory consolidation. The chain is Glutamate [NMDA] receptor subunit 1 from Drosophila melanogaster (Fruit fly).